The primary structure comprises 551 residues: Glucan 1,4-alpha-maltotetraohydrolase (551 aa).

The signal sequence occupies residues 1 to 21 (MSHILRAAVLAAVLLPFPALA). The Ca(2+) site is built by Asp-22, Gln-23, His-34, Asp-37, and Glu-38. Residue 99–100 (YF) participates in substrate binding. Position 137 (Asn-137) interacts with Ca(2+). His-138 is a substrate binding site. A disulfide bridge connects residues Cys-161 and Cys-171. Residues Asp-172 and Asp-175 each contribute to the Ca(2+) site. A substrate-binding site is contributed by 177 to 181 (FIGGE). A Ca(2+)-binding site is contributed by Asp-183. Substrate is bound at residue Arg-212. The active-site Nucleophile is the Asp-214. Residue Gly-218 participates in Ca(2+) binding. Cys-237 and Cys-272 are joined by a disulfide. Catalysis depends on Glu-240, which acts as the Proton donor. Substrate contacts are provided by His-314 and Gln-326. The CBM20 domain maps to 449–551 (GGEGGLVNVN…AAGASTSGSF (103 aa)).

This sequence belongs to the glycosyl hydrolase 13 family. Monomer. Ca(2+) serves as cofactor.

The protein resides in the secreted. It catalyses the reaction Hydrolysis of (1-&gt;4)-alpha-D-glucosidic linkages in amylaceous polysaccharides, to remove successive maltotetraose residues from the non-reducing chain ends.. The protein operates within glycan degradation; starch degradation. The chain is Glucan 1,4-alpha-maltotetraohydrolase (mta) from Roseateles saccharophilus (Pseudomonas saccharophila).